Here is a 115-residue protein sequence, read N- to C-terminus: Tyrosine-protein phosphatase 19 (115 aa).

One can recognise a Tyrosine-protein phosphatase domain in the interval 1–115; that stretch reads WLMIVEQKCR…ETGSDAPMVV (115 aa). Asp83 contacts substrate.

It belongs to the protein-tyrosine phosphatase family.

The catalysed reaction is O-phospho-L-tyrosyl-[protein] + H2O = L-tyrosyl-[protein] + phosphate. The protein is Tyrosine-protein phosphatase 19 (STY-19) of Styela plicata (Wrinkled sea squirt).